Consider the following 209-residue polypeptide: Thiamine-phosphate synthase 1 (209 aa).

4-amino-2-methyl-5-(diphosphooxymethyl)pyrimidine is bound by residues 39–43 (QFREK) and asparagine 74. Aspartate 75 and aspartate 94 together coordinate Mg(2+). Serine 112 lines the 4-amino-2-methyl-5-(diphosphooxymethyl)pyrimidine pocket. 2-[(2R,5Z)-2-carboxy-4-methylthiazol-5(2H)-ylidene]ethyl phosphate is bound at residue 138 to 140 (TQS). Lysine 141 is a 4-amino-2-methyl-5-(diphosphooxymethyl)pyrimidine binding site. Residues glycine 170 and 190–191 (IS) contribute to the 2-[(2R,5Z)-2-carboxy-4-methylthiazol-5(2H)-ylidene]ethyl phosphate site.

The protein belongs to the thiamine-phosphate synthase family. Mg(2+) serves as cofactor.

The enzyme catalyses 2-[(2R,5Z)-2-carboxy-4-methylthiazol-5(2H)-ylidene]ethyl phosphate + 4-amino-2-methyl-5-(diphosphooxymethyl)pyrimidine + 2 H(+) = thiamine phosphate + CO2 + diphosphate. It carries out the reaction 2-(2-carboxy-4-methylthiazol-5-yl)ethyl phosphate + 4-amino-2-methyl-5-(diphosphooxymethyl)pyrimidine + 2 H(+) = thiamine phosphate + CO2 + diphosphate. The catalysed reaction is 4-methyl-5-(2-phosphooxyethyl)-thiazole + 4-amino-2-methyl-5-(diphosphooxymethyl)pyrimidine + H(+) = thiamine phosphate + diphosphate. It participates in cofactor biosynthesis; thiamine diphosphate biosynthesis; thiamine phosphate from 4-amino-2-methyl-5-diphosphomethylpyrimidine and 4-methyl-5-(2-phosphoethyl)-thiazole: step 1/1. Functionally, condenses 4-methyl-5-(beta-hydroxyethyl)thiazole monophosphate (THZ-P) and 2-methyl-4-amino-5-hydroxymethyl pyrimidine pyrophosphate (HMP-PP) to form thiamine monophosphate (TMP). This is Thiamine-phosphate synthase 1 from Streptococcus pneumoniae (strain ATCC BAA-255 / R6).